We begin with the raw amino-acid sequence, 316 residues long: UDP-N-acetylenolpyruvoylglucosamine reductase (316 aa).

Positions 27-225 (VGGKAERFYR…KTAINALLKK (199 aa)) constitute an FAD-binding PCMH-type domain. Arg190 is a catalytic residue. Ser239 (proton donor) is an active-site residue. The active site involves Glu309.

This sequence belongs to the MurB family. FAD is required as a cofactor.

It is found in the cytoplasm. The enzyme catalyses UDP-N-acetyl-alpha-D-muramate + NADP(+) = UDP-N-acetyl-3-O-(1-carboxyvinyl)-alpha-D-glucosamine + NADPH + H(+). Its pathway is cell wall biogenesis; peptidoglycan biosynthesis. Functionally, cell wall formation. This Coxiella burnetii (strain CbuG_Q212) (Coxiella burnetii (strain Q212)) protein is UDP-N-acetylenolpyruvoylglucosamine reductase.